We begin with the raw amino-acid sequence, 191 residues long: MKKNLLGFTLASLLFTTGSAVAAEYKIDKEGQHAFVNFRIQHLSYSWLYGTFKDFDGTFTFDEKNPSADKVNVTINTNSVDTNHAERDKHLRSAEFLNVAKFPQATFTSTSVKKEGDELDITGNLTLNGVTKPVTLEAKLMGQGDDPWGGKRAGFEAEGKIKLKDFNITTDLGPASQEVELIISVEGVQQK.

The signal sequence occupies residues 1–22 (MKKNLLGFTLASLLFTTGSAVA).

This sequence belongs to the UPF0312 family. Type 1 subfamily.

It is found in the periplasm. The protein is Protein YceI of Salmonella newport (strain SL254).